The primary structure comprises 200 residues: Pyridoxal 5'-phosphate synthase subunit PdxT (200 aa).

52–54 provides a ligand contact to L-glutamine; sequence GES. C84 (nucleophile) is an active-site residue. L-glutamine is bound by residues R116 and 145–146; that span reads IR. Active-site charge relay system residues include H181 and E183.

Belongs to the glutaminase PdxT/SNO family. In the presence of PdxS, forms a dodecamer of heterodimers. Only shows activity in the heterodimer.

The catalysed reaction is aldehydo-D-ribose 5-phosphate + D-glyceraldehyde 3-phosphate + L-glutamine = pyridoxal 5'-phosphate + L-glutamate + phosphate + 3 H2O + H(+). It carries out the reaction L-glutamine + H2O = L-glutamate + NH4(+). The protein operates within cofactor biosynthesis; pyridoxal 5'-phosphate biosynthesis. Catalyzes the hydrolysis of glutamine to glutamate and ammonia as part of the biosynthesis of pyridoxal 5'-phosphate. The resulting ammonia molecule is channeled to the active site of PdxS. In Sulfurisphaera tokodaii (strain DSM 16993 / JCM 10545 / NBRC 100140 / 7) (Sulfolobus tokodaii), this protein is Pyridoxal 5'-phosphate synthase subunit PdxT.